The primary structure comprises 330 residues: MKKSFILQQQEISFAKNTFTTKLAEHLGLVEVQGPILSQVGNGIQDNLSGKEKPVQVNVKMIEDATFEVVHSLAKWKRHTLARFGFAEGEGLFVHMKALRPDEDSLDQTHSVYVDQWDWEKVIPAGRRNLNYLKETVRSIYAAIVETQEAVEQKFGLKAFLPKEITFIHSEDLARDYPHMTDKERENEICKKYGAVFLIGIGGDLPDGKPHDMRAPDYDDWTTSSEGEYKGLNGDILVWNPVLNRAFELSSMGIRVDETALRRQLALTHDEERLNFAWHQDLINGRMPLSIGGGIGQSRLAMLLLQKHHIGEVQSSVWPKTVMEQFENIL.

It belongs to the class-II aminoacyl-tRNA synthetase family. AsnA subfamily.

It is found in the cytoplasm. The enzyme catalyses L-aspartate + NH4(+) + ATP = L-asparagine + AMP + diphosphate + H(+). It participates in amino-acid biosynthesis; L-asparagine biosynthesis; L-asparagine from L-aspartate (ammonia route): step 1/1. The sequence is that of Aspartate--ammonia ligase from Actinobacillus succinogenes (strain ATCC 55618 / DSM 22257 / CCUG 43843 / 130Z).